The primary structure comprises 151 residues: Small ribosomal subunit protein uS15 (151 aa).

The disordered stretch occupies residues 1-20 (MGRMHSNGKGISGSSLPYNR).

It belongs to the universal ribosomal protein uS15 family. As to quaternary structure, component of the small ribosomal subunit. Part of the small subunit (SSU) processome, composed of more than 70 proteins and the RNA chaperone small nucleolar RNA (snoRNA) U3.

The protein resides in the cytoplasm. The protein localises to the nucleus. Its subcellular location is the nucleolus. Component of the small ribosomal subunit. The ribosome is a large ribonucleoprotein complex responsible for the synthesis of proteins in the cell. Part of the small subunit (SSU) processome, first precursor of the small eukaryotic ribosomal subunit. During the assembly of the SSU processome in the nucleolus, many ribosome biogenesis factors, an RNA chaperone and ribosomal proteins associate with the nascent pre-rRNA and work in concert to generate RNA folding, modifications, rearrangements and cleavage as well as targeted degradation of pre-ribosomal RNA by the RNA exosome. The protein is Small ribosomal subunit protein uS15 (rps13) of Dictyostelium discoideum (Social amoeba).